The chain runs to 356 residues: 4-hydroxy-3-methylbut-2-en-1-yl diphosphate synthase (flavodoxin) (356 aa).

[4Fe-4S] cluster is bound by residues Cys-262, Cys-265, Cys-297, and Glu-304.

It belongs to the IspG family. It depends on [4Fe-4S] cluster as a cofactor.

It carries out the reaction (2E)-4-hydroxy-3-methylbut-2-enyl diphosphate + oxidized [flavodoxin] + H2O + 2 H(+) = 2-C-methyl-D-erythritol 2,4-cyclic diphosphate + reduced [flavodoxin]. Its pathway is isoprenoid biosynthesis; isopentenyl diphosphate biosynthesis via DXP pathway; isopentenyl diphosphate from 1-deoxy-D-xylulose 5-phosphate: step 5/6. In terms of biological role, converts 2C-methyl-D-erythritol 2,4-cyclodiphosphate (ME-2,4cPP) into 1-hydroxy-2-methyl-2-(E)-butenyl 4-diphosphate. The polypeptide is 4-hydroxy-3-methylbut-2-en-1-yl diphosphate synthase (flavodoxin) (Campylobacter fetus subsp. fetus (strain 82-40)).